The primary structure comprises 1028 residues: Pro-apoptotic serine protease NMA111 (1028 aa).

The segment covering 1 to 10 (MEMSSKRKHS) has biased composition (basic residues). Residues 1–39 (MEMSSKRKHSSGPISLRSTKHLRSDTAASPQPLTPDDQT) are disordered. Residues 85–269 (VVSIHFCQTA…AATDYFLPLD (185 aa)) are serine protease. Active-site charge relay system residues include His-123, Asp-154, and Ser-236. 2 PDZ domains span residues 292–377 (QWII…LLVQ) and 878–959 (IFCG…VTFD). A disordered region spans residues 1003-1028 (SDNLNADAMDEGRDDGISDMEPDGEK). Acidic residues predominate over residues 1019–1028 (ISDMEPDGEK).

Belongs to the peptidase S1C family.

The protein resides in the nucleus. Nuclear serine protease which mediates apoptosis. The protein is Pro-apoptotic serine protease NMA111 (NMA111) of Ajellomyces capsulatus (strain NAm1 / WU24) (Darling's disease fungus).